Reading from the N-terminus, the 178-residue chain is Caveolin-1 (178 aa).

Serine 2 carries the post-translational modification N-acetylserine. Phosphoserine is present on serine 2. Positions 2-94 (SGGKYVDSEG…WKASFTTFTV (93 aa)) are required for homooligomerization. The Cytoplasmic segment spans residues 2–104 (SGGKYVDSEG…TKYWFYRLLS (103 aa)). Lysine 5 is modified (N6-acetyllysine; alternate). Lysine 5 participates in a covalent cross-link: Glycyl lysine isopeptide (Lys-Gly) (interchain with G-Cter in ubiquitin); alternate. Tyrosine 6 is subject to Phosphotyrosine. Serine 9 carries the phosphoserine modification. Tyrosine 14 is modified (phosphotyrosine; by ABL1). A Phosphotyrosine modification is found at tyrosine 25. Residues lysine 26, lysine 30, lysine 39, lysine 47, and lysine 57 each participate in a glycyl lysine isopeptide (Lys-Gly) (interchain with G-Cter in ubiquitin) cross-link. Residues 82–94 (DGIWKASFTTFTV) form an interaction with CAVIN3 region. The segment at residues 105 to 125 (TIFGIPMALIWGIYFAILSFL) is an intramembrane region (helical). Over 126–178 (HIWAVVPCIKSFLIEIQCISRVYSIYVHTFCDPLFEAIGKIFSNVRISMQKEI) the chain is Cytoplasmic. The tract at residues 131 to 142 (VPCIKSFLIEIQ) is interacts with SPRY1, SPRY2, SPRY3 and SPRY4. S-palmitoyl cysteine attachment occurs at residues cysteine 133, cysteine 143, and cysteine 156. The interacts with SPRY1, SPRY2, and SPRY4 stretch occupies residues 149–160 (SIYVHTFCDPLF). Residues 167–178 (FSNVRISMQKEI) are interacts with SPRY1, SPRY2, SPRY3 and SPRY4.

Belongs to the caveolin family. In terms of assembly, homooligomer. Interacts with GLIPR2. Interacts with NOSTRIN. Interacts with SNAP25 and STX1A. Interacts (via the N-terminus) with DPP4; the interaction is direct. Interacts with CTNNB1, CDH1 and JUP. Interacts with PACSIN2; this interaction induces membrane tubulation. Interacts with SLC7A9. Interacts with BMX and BTK. Interacts with TGFBR1. Interacts with CAVIN3 (via leucine-zipper domain) in a cholesterol-sensitive manner. Interacts with CAVIN1. Interacts with EHD2 in a cholesterol-dependent manner. Forms a ternary complex with UBXN6 and VCP; mediates CAV1 targeting to lysosomes for degradation. Interacts with ABCG1; this interaction regulates ABCG1-mediated cholesterol efflux. Interacts with NEU3; this interaction enhances NEU3 sialidase activity within caveola. Interacts (via C-terminus) with SPRY1, SPRY2 (via C-terminus), SPRY3, and SPRY4. Interacts with IGFBP5; this interaction allows trafficking of IGFBP5 from the plasma membrane to the nucleus. Phosphorylated at Tyr-14 by ABL1 in response to oxidative stress. In terms of processing, ubiquitinated. Undergo monoubiquitination and multi- and/or polyubiquitination. Monoubiquitination of N-terminal lysines promotes integration in a ternary complex with UBXN6 and VCP which promotes oligomeric CAV1 targeting to lysosomes for degradation. Ubiquitinated by ZNRF1; leading to degradation and modulation of the TLR4-mediated immune response.

It is found in the golgi apparatus membrane. The protein resides in the cell membrane. Its subcellular location is the membrane. It localises to the caveola. The protein localises to the membrane raft. Functionally, may act as a scaffolding protein within caveolar membranes. Forms a stable heterooligomeric complex with CAV2 that targets to lipid rafts and drives caveolae formation. Mediates the recruitment of CAVIN proteins (CAVIN1/2/3/4) to the caveolae. Interacts directly with G-protein alpha subunits and can functionally regulate their activity. Involved in the costimulatory signal essential for T-cell receptor (TCR)-mediated T-cell activation. Its binding to DPP4 induces T-cell proliferation and NF-kappa-B activation in a T-cell receptor/CD3-dependent manner. Recruits CTNNB1 to caveolar membranes and may regulate CTNNB1-mediated signaling through the Wnt pathway. Negatively regulates TGFB1-mediated activation of SMAD2/3 by mediating the internalization of TGFBR1 from membrane rafts leading to its subsequent degradation. Binds 20(S)-hydroxycholesterol (20(S)-OHC). This chain is Caveolin-1 (CAV1), found in Oryctolagus cuniculus (Rabbit).